A 357-amino-acid polypeptide reads, in one-letter code: UDP-N-acetylglucosamine--N-acetylmuramyl-(pentapeptide) pyrophosphoryl-undecaprenol N-acetylglucosamine transferase (357 aa).

Residues R166, S196, and Q290 each contribute to the UDP-N-acetyl-alpha-D-glucosamine site.

The protein belongs to the glycosyltransferase 28 family. MurG subfamily.

It localises to the cell membrane. The catalysed reaction is Mur2Ac(oyl-L-Ala-gamma-D-Glu-L-Lys-D-Ala-D-Ala)-di-trans,octa-cis-undecaprenyl diphosphate + UDP-N-acetyl-alpha-D-glucosamine = beta-D-GlcNAc-(1-&gt;4)-Mur2Ac(oyl-L-Ala-gamma-D-Glu-L-Lys-D-Ala-D-Ala)-di-trans,octa-cis-undecaprenyl diphosphate + UDP + H(+). It functions in the pathway cell wall biogenesis; peptidoglycan biosynthesis. Cell wall formation. Catalyzes the transfer of a GlcNAc subunit on undecaprenyl-pyrophosphoryl-MurNAc-pentapeptide (lipid intermediate I) to form undecaprenyl-pyrophosphoryl-MurNAc-(pentapeptide)GlcNAc (lipid intermediate II). This chain is UDP-N-acetylglucosamine--N-acetylmuramyl-(pentapeptide) pyrophosphoryl-undecaprenol N-acetylglucosamine transferase, found in Staphylococcus epidermidis (strain ATCC 35984 / DSM 28319 / BCRC 17069 / CCUG 31568 / BM 3577 / RP62A).